The following is an 80-amino-acid chain: Polcalcin Cyn d 7 (80 aa).

2 consecutive EF-hand domains span residues 2-37 (ADTGDMEHIFKRFDTNGDGKISLAELTDALRTLGST) and 40-72 (DEVQRMMAEIDTDGDGFIDFDEFISFCNANPGL). Ca(2+)-binding residues include aspartate 15, asparagine 17, aspartate 19, lysine 21, glutamate 26, aspartate 50, aspartate 52, aspartate 54, and glutamate 61.

The chain is Polcalcin Cyn d 7 from Cynodon dactylon (Bermuda grass).